A 481-amino-acid chain; its full sequence is Probable glycine dehydrogenase (decarboxylating) subunit 2 (481 aa).

The tract at residues 1–23 is disordered; it reads MVIFEKTRGKNSPSVMPSKKGDV. K263 is subject to N6-(pyridoxal phosphate)lysine.

It belongs to the GcvP family. C-terminal subunit subfamily. In terms of assembly, the glycine cleavage system is composed of four proteins: P, T, L and H. In this organism, the P 'protein' is a heterodimer of two subunits. Requires pyridoxal 5'-phosphate as cofactor.

The enzyme catalyses N(6)-[(R)-lipoyl]-L-lysyl-[glycine-cleavage complex H protein] + glycine + H(+) = N(6)-[(R)-S(8)-aminomethyldihydrolipoyl]-L-lysyl-[glycine-cleavage complex H protein] + CO2. In terms of biological role, the glycine cleavage system catalyzes the degradation of glycine. The P protein binds the alpha-amino group of glycine through its pyridoxal phosphate cofactor; CO(2) is released and the remaining methylamine moiety is then transferred to the lipoamide cofactor of the H protein. This chain is Probable glycine dehydrogenase (decarboxylating) subunit 2, found in Francisella philomiragia subsp. philomiragia (strain ATCC 25017 / CCUG 19701 / FSC 153 / O#319-036).